Consider the following 21-residue polypeptide: Cupiennin-6e (21 aa).

Ser-21 carries the post-translational modification Serine amide.

Expressed by the venom gland.

The protein resides in the secreted. The chain is Cupiennin-6e from Cupiennius salei (American wandering spider).